Here is a 551-residue protein sequence, read N- to C-terminus: Nose resistant to fluoxetine protein 5 (551 aa).

Residues 1-20 (MSRNFHIFFLLVSIIQVGNS) form the signal peptide. An intrachain disulfide couples Cys-151 to Cys-232. Residues 241–265 (EDSEQEEGNVETTVAPTPDDDNSTL) are disordered.

Belongs to the BPI/LBP/Plunc superfamily. BPI/LBP family. Interacts with ttr-52. In terms of tissue distribution, expressed in the body wall muscle cells and detected at the basal surface of pharyngeal cells and basal-lateral membranes of the intestine.

It localises to the secreted. In terms of biological role, plays a role in the uptake of a range of molecules including phosphatidylserine, lipids and xenobiotic compounds from the intestine to surrounding tissues. Possesses lipid transfer activity. Mediates transport of lipids from intestine to reproductive tract. Binds phosphatidylserine. Plays a role in efficient clearance of cell corpses by mediating phosphatidylserine appearance on phagocytic cells, thus promoting phagocytic engulfment of apoptotic cells. Vital for embryonic development. The polypeptide is Nose resistant to fluoxetine protein 5 (Caenorhabditis elegans).